The following is a 343-amino-acid chain: Tetraacyldisaccharide 4'-kinase (343 aa).

H51–T58 contacts ATP.

It belongs to the LpxK family.

The catalysed reaction is a lipid A disaccharide + ATP = a lipid IVA + ADP + H(+). It participates in glycolipid biosynthesis; lipid IV(A) biosynthesis; lipid IV(A) from (3R)-3-hydroxytetradecanoyl-[acyl-carrier-protein] and UDP-N-acetyl-alpha-D-glucosamine: step 6/6. In terms of biological role, transfers the gamma-phosphate of ATP to the 4'-position of a tetraacyldisaccharide 1-phosphate intermediate (termed DS-1-P) to form tetraacyldisaccharide 1,4'-bis-phosphate (lipid IVA). In Rhodopseudomonas palustris (strain BisB18), this protein is Tetraacyldisaccharide 4'-kinase.